Consider the following 89-residue polypeptide: Small ribosomal subunit protein uS15 (89 aa).

A compositionally biased stretch (basic and acidic residues) spans 1–11 (MSITAERKAEV). A disordered region spans residues 1–24 (MSITAERKAEVIKTNAKKAGDTGS).

It belongs to the universal ribosomal protein uS15 family. In terms of assembly, part of the 30S ribosomal subunit. Forms a bridge to the 50S subunit in the 70S ribosome, contacting the 23S rRNA.

One of the primary rRNA binding proteins, it binds directly to 16S rRNA where it helps nucleate assembly of the platform of the 30S subunit by binding and bridging several RNA helices of the 16S rRNA. Its function is as follows. Forms an intersubunit bridge (bridge B4) with the 23S rRNA of the 50S subunit in the ribosome. The polypeptide is Small ribosomal subunit protein uS15 (Afipia carboxidovorans (strain ATCC 49405 / DSM 1227 / KCTC 32145 / OM5) (Oligotropha carboxidovorans)).